The chain runs to 535 residues: Protein translocase subunit SecD (535 aa).

6 helical membrane-spanning segments follow: residues 5 to 25 (LTWKVVVIVAVLLVFAFGIIG), 377 to 397 (AIIGFVAVIIFMLIYYKGAGI), 402 to 421 (SLLLNLVILLGFMGYFGAVL), 425 to 444 (GIAGVILTVGMGVDSNVLIF), 469 to 489 (WLTIIDTHVTTIVSAIILFLF), and 496 to 516 (GFAVTLSFGLFANLFTAVFVS).

This sequence belongs to the SecD/SecF family. SecD subfamily. Forms a complex with SecF. Part of the essential Sec protein translocation apparatus which comprises SecA, SecYEG and auxiliary proteins SecDF. Other proteins may also be involved.

Its subcellular location is the cell inner membrane. Functionally, part of the Sec protein translocase complex. Interacts with the SecYEG preprotein conducting channel. SecDF uses the proton motive force (PMF) to complete protein translocation after the ATP-dependent function of SecA. The protein is Protein translocase subunit SecD of Koribacter versatilis (strain Ellin345).